The following is a 240-amino-acid chain: Probable transcriptional regulatory protein MS53_0373 (240 aa).

Belongs to the TACO1 family.

Its subcellular location is the cytoplasm. This chain is Probable transcriptional regulatory protein MS53_0373, found in Mycoplasmopsis synoviae (strain 53) (Mycoplasma synoviae).